We begin with the raw amino-acid sequence, 493 residues long: Guanosine-5'-triphosphate,3'-diphosphate pyrophosphatase (493 aa).

Belongs to the GppA/Ppx family. GppA subfamily.

It carries out the reaction guanosine 3'-diphosphate 5'-triphosphate + H2O = guanosine 3',5'-bis(diphosphate) + phosphate + H(+). The protein operates within purine metabolism; ppGpp biosynthesis; ppGpp from GTP: step 2/2. Its function is as follows. Catalyzes the conversion of pppGpp to ppGpp. Guanosine pentaphosphate (pppGpp) is a cytoplasmic signaling molecule which together with ppGpp controls the 'stringent response', an adaptive process that allows bacteria to respond to amino acid starvation, resulting in the coordinated regulation of numerous cellular activities. The protein is Guanosine-5'-triphosphate,3'-diphosphate pyrophosphatase of Salmonella paratyphi A (strain ATCC 9150 / SARB42).